The primary structure comprises 192 residues: Adenylate kinase (192 aa).

10 to 15 provides a ligand contact to ATP; the sequence is GAGKGT. The segment at 30-59 is NMP; that stretch reads STGDMLREVIAKETEVGKKAKAIISSGALV. AMP contacts are provided by residues threonine 31, arginine 36, 57–59, 85–88, and glutamine 92; these read ALV and GYPR. The segment at 126-142 is LID; the sequence is RRVQETVAAGGQVRLDD. Residue arginine 127 participates in ATP binding. Arginine 139 and arginine 150 together coordinate AMP. Position 178 (isoleucine 178) interacts with ATP.

This sequence belongs to the adenylate kinase family. In terms of assembly, monomer.

The protein resides in the cytoplasm. The enzyme catalyses AMP + ATP = 2 ADP. It participates in purine metabolism; AMP biosynthesis via salvage pathway; AMP from ADP: step 1/1. Functionally, catalyzes the reversible transfer of the terminal phosphate group between ATP and AMP. Plays an important role in cellular energy homeostasis and in adenine nucleotide metabolism. The chain is Adenylate kinase from Bartonella tribocorum (strain CIP 105476 / IBS 506).